The chain runs to 492 residues: Steroid 21-hydroxylase (492 aa).

The heme b site is built by R91 and K120. 17alpha-hydroxyprogesterone is bound at residue R231. A progesterone-binding site is contributed by R231. Residues H363, R424, and C426 each coordinate heme b.

The protein belongs to the cytochrome P450 family. The cofactor is heme b.

Its subcellular location is the endoplasmic reticulum membrane. It localises to the microsome membrane. The catalysed reaction is 17alpha-hydroxyprogesterone + reduced [NADPH--hemoprotein reductase] + O2 = 11-deoxycortisol + oxidized [NADPH--hemoprotein reductase] + H2O + H(+). It carries out the reaction progesterone + reduced [NADPH--hemoprotein reductase] + O2 = 21-hydroxyprogesterone + oxidized [NADPH--hemoprotein reductase] + H2O + H(+). Functionally, specifically catalyzes the 21-hydroxylation of steroids. Required for the adrenal synthesis of mineralocorticoids and glucocorticoids. The sequence is that of Steroid 21-hydroxylase (CYP21) from Canis lupus familiaris (Dog).